Reading from the N-terminus, the 380-residue chain is MKILINKSELNKILKKMNNVIISNNKIKPHHSYFLIEAKEKEINFYANNEYFSVKCNLNKNIDILEQGSLIVKGKIFNDLINGIKEEIITIQEKDQTLLVKTKKTSINLNTINVNEFPRIRFNEKNDLSEFNQFKINYSLLVKGIKKIFHSVSNNREISSKFNGVNFNGSNGKEIFLEASDTYKLSVFEIKQETEPFDFILESNLLSFINSFNPEEDKSIVFYYRKDNKDSFSTEMLISMDNFMISYTSVNEKFPEVNYFFEFEPETKIVVQKNELKDALQRIQTLAQNERTFLCDMQINSSELKIRAIVNNIGNSLEEISCLKFEGYKLNISFNPSSLLDHIESFESNEINFDFQGNSKYFLITSKSEPELKQILVPSR.

The protein belongs to the beta sliding clamp family. In terms of assembly, forms a ring-shaped head-to-tail homodimer around DNA which binds and tethers DNA polymerases and other proteins to the DNA. The DNA replisome complex has a single clamp-loading complex (3 tau and 1 each of delta, delta', psi and chi subunits) which binds 3 Pol III cores (1 core on the leading strand and 2 on the lagging strand) each with a beta sliding clamp dimer. Additional proteins in the replisome are other copies of gamma, psi and chi, Ssb, DNA helicase and RNA primase.

It is found in the cytoplasm. Functionally, confers DNA tethering and processivity to DNA polymerases and other proteins. Acts as a clamp, forming a ring around DNA (a reaction catalyzed by the clamp-loading complex) which diffuses in an ATP-independent manner freely and bidirectionally along dsDNA. Initially characterized for its ability to contact the catalytic subunit of DNA polymerase III (Pol III), a complex, multichain enzyme responsible for most of the replicative synthesis in bacteria; Pol III exhibits 3'-5' exonuclease proofreading activity. The beta chain is required for initiation of replication as well as for processivity of DNA replication. This Mycoplasma genitalium (strain ATCC 33530 / DSM 19775 / NCTC 10195 / G37) (Mycoplasmoides genitalium) protein is Beta sliding clamp (dnaN).